The chain runs to 369 residues: Putative 2-aminoethylphosphonate import ATP-binding protein PhnT (369 aa).

An ABC transporter domain is found at 19-250; sequence IVLDSLRVAY…PPNRFAAEFL (232 aa). 51-58 is a binding site for ATP; sequence GPSGSGKT.

The protein belongs to the ABC transporter superfamily. 2-aminoethylphosphonate importer (TC 3.A.1.11.5) family.

The protein resides in the cell inner membrane. Probably part of the PhnSTUV complex (TC 3.A.1.11.5) involved in 2-aminoethylphosphonate import. Probably responsible for energy coupling to the transport system. This Salmonella typhi protein is Putative 2-aminoethylphosphonate import ATP-binding protein PhnT (phnT).